Reading from the N-terminus, the 4042-residue chain is MGSSSKDYTNEPIAIVGSACRFPGGASEPSKLWDLLEHPTDVLKEIPESRFSVDGFYHPNGLHHGTTNVRHSYILDDDIRLFDAQFFGIKPIEANSIDPQQRLLMETVYEGLEAAGQSIQRLQGSQTAVYVGLMSSDYKDLLGNDQESYPTLVALHQAVQLLRSGDGTNVALAAGTNLLLNPDQYIAESKLKMLSPDGRSRMWDEKANGYARGDGIAVVVLKRLSQALEDGDHIECLIRETQINQDGKTKGITMPSATAQTALIRATYAKAGLDLSKPSDRPQYFEAHGTGTPAGDPIEAEAIHTAFFGGDLGEAGHDKLFVGSIKTVIGHTEGTAGLAAVLKASLALQNRAVPPNRLFDRLNSKIRPFYGDLEILTKAQEWPVLVPGSVARASVNSFGFGGANAHAILEAYEPPSLVSDDVLVTPLAPVQFSAASETALRGTLRKYAEFLEKNQDVNLRDLAWTLNTRRSVLAARTAVFGANALDLAHELQKRAEADVATLIPVASRSLPAKPRILGVFTGQGAQWARMGAELLDASPAVDRIISELEKSLSTLPDGPEWSVKGEILATGGASRVAEAAISQPLCTAVQIVLVDLLKSAGINFEAVVGHSSGEMGAAYAAGYLSAQDAIRVAYYRGRHLHLAGGLGGEQGGMMAVGTSFEDAEELCSLPEFQGRIGVAAINSGASVTLSGDLDTIEAAKEILDDEKKFARLLKVDKAYHSHHMIACSDAYRKSLADCSIKVLRPSRGSATWLSSVYGEDIVDYRKELTSEYWINNMVRPVLFSQAVEFAAAEKGPFDCAIEVGPHPALKGPALQVLQEFLGNSIPYTGLLSRDRDDKKAFAEGLGYLWQAFGENAIDHKSFDTFVAGASAPLPQITSNLPTYAWDHDRRFWHESRQYAANRTKPDPTHELLGTKCPDGTEQQCRWRNMLRPQEIPWLAGHQIQGQMVFPAAGYVSAAVEAVKFSNEGLPITTIEIEDFVIGQAIIFNDDYASVETQFTLTNIVSDHMSWSASFAFYSASQKHSLGMDLNASGRISALFGPPKDDVLPPSTGRELNMIDVDPEQFYNSLSKLGFGYTGAFKALRNLYRKMDVAMGEIQNPRSTDPAYNLLLHPATFDNAIQSIILAYCYPGDGRLWSVHLPTSIKKIRINPSLCENSAGQEAVLHFKSTITSGRSTEIQGDVELYDTNGVNSIMQLEGLHTKPLGHATPENDRTLFLETIWDTAEPTKELALLAQPDISKKAQLGLDIERVAFYYIRNLGHVTTKADREQAEDYHKHFFNYIDHTVVSVNNGTSLFAKKEWMHDTHEQVLDIIKSYPESIDMKLMYAVGEHLLPVIRHETTMLEYMREDDMLNDFYVKALGFDEYTETMADQVCQLAHRYPHMNVLEIGAGTGGATKRIFKKLGKRFSSYTYTDISTGFFEKAREVFSEVESKMTFKALNIEKDPIAQGYTEGSYDLIVASLVLHATHVMEDTMRNVRRLLKPGGYLIMLELGDYVDMRTGLMFGPLPGWWMGYDDGRKLSPTMSEDDWDKCMKKVGFSGVDAIVPRQEHVPISLAIMTAQAVDEHVEFIRNPFASDGMFLLGHHLTLIGGSTDKTAKLLEAALPYLRSFYKHVTTVKSLASLSTIELPFMGSVICLEDLDVAVFENLSTETLQGVQHLFTKSKSCLWVTQGRKDDNPYQNMTVGLGRVATLEMTHLRLQSLDFDVIDSSTAVIMAKSLLRFEATEAWEQQGLAKNLLWSVEPEMSYEKGSFRVPRLIPNHARNNRYNSSRRLITQNKDPRTSTIGLRWTSKGYEIHNESPASSGLAFDGRVELQVSHSSLEAIRITKADYAYLVLGTNLRTKEQAFAITPDRHSIVRVFDSWTVPYTMTTEEALRLLPLVQDHLMALATMSDFSSGEALILIEPRWRFARLLSNLAQEKGVKLILLTTRLDIKDQDWITLHPNAPRRIIQSHMPKTASRLISCTDDLEFEANVKACLPPNCKMQRTEIFSSRVSKLDSFSSMAFIPSSLRSAFVRAHHESSPGDKESIASVSDIVSRGKPAKATFFSWDSSPTIPVQITPVDLEPLFSSDKTYWLVGLTGGLGLSLCEWMIQRGAKYVVLTSRNPQVDAKWEAHMKAHDAVVRIYANDVTDRDSVRSVYKQIRDELPPIGGVAQGAMVLSDAMFVDMGLERVCKVVEPKVKGAIHLEELFSEADLEFFVFFSSMAYVTGNQGQSIYAAANAYMAALAAQRKKRGLAGSVINIGAIVGNGYVTRQLTDEQRDYLAHMGNVFMSEQDFHQIFAEGVVAGRPGNDDIPEIMTGLGLAHMDDSDKVTWFNNPKFSHCVLWPDDQGAAVGMSKQNVTVKSRLLLATTADEVNEAIQESFTMKLRSSLQIEDSVAILKMNAEELGLDSLVAVDLRSWFVKELNVEMPVLKILGGFTVAELVSAAQEQLPASLTPNFGKEIDPALKAAAMLEKAAKTETVPRITNEANTAAYREEVDEEEQEEDEADNRPNFFSSASKDATQSSERFAIDASHISKSREVAFKATLLAPPATRSKTSSSSSSFTSDPENDFMMKSQMSAATPLSSYNDEYITAEDIKFERVSPMSFGQARFWFLKFYLQDQTTFNITTSIRLSGRLNVETFANAVQAVGRRHEGLRTAFFTDRHNQPMQGILHQSVLHLEHLRVSSQEAIDIEYAKTKNHVYNIGGGETMKIILLSLADDLYQIIIGYHHINMDGMSLEVILSDLQKVYNQQQLARVVPQYLDFSESQRREHSTGKWGKEISFWKGEFADIPAPLPILPMSKKSNRSPLTKYASNTVKFKIDAATSAQIQIACKRAKASPFNFYLAAFKTLLYRTAGEEQNDICIGIADGGRNSEHVEESVGFFLNILPLRFKQDSAQTFLEALRDARSKVVAALANSRVPFDVILNEVNAPRAATHNPLFQAFINYRQGVQERRQFCGCDSEATQFDGSQTAYDISIDILANPGADSTVYISGQSDLYSEENVKLLAHSYLALIKSFAKNPASRLGRPPLYDPQDTHRALDVGVGPELTDTWPNTLVDRVDEMASRFGSQIALKGPRNQLTYSQMTDRIHSIASSLKSNKIGNCSRVGVLQDPSTDFFCSLLAILRIGAIFVPLELRLTSPRLAVIVEDSNIDAIIYDKANQKDLLTLGSGFQKVNVSLIPAKSTSTVVNEAQPGSPAVILYTSGSTGKPKGILLSHASWRNQIQSSTQAFRIPQGTGVHLQQSSWSFDIAISQTFVALANGASLLIVSKELRGDSIAMARMIVSDRITHVQATPSEMVSWLHDADANALRSSSWKFAMSGGEKMNSALIGEFKALGKSDLALVNAYGPAETTLAVGSAEIDILDPGALDTAFRLFPNYSVYILDSKKQPVPLGISGEVYIGGAGVATGYLNNDNLTKERFLPDDFAPERYLQNDWTIMHRSGDRGRLTADGLVLEGRVDGDTQIKLRGIRIDLQDIESTIVQHSKGAVRDAVVSLRKSGETQILAAHIVLSAAFSGNAKTILDSIQTSLPLPQYMRPATTLVVKTLPTNYSGKLDRKAVSELPLRPVSKTSVPVTKENKSPESELRTIWKQVLGDDITSSHEIDYETDFFHVGGNSLALVRVQGMLKAAFNVEPPVAQLFDNSTLGAMLNLISPASQTMSTEHSSLLPNVVEYSPQAAASSGTIDWEKETALTDDLYDAEINPTPRDQGLAFKTVAITGASGFLGKEILKRMVDDVHIDKIHAIAIRRHISDLPAIFSNAKVQVHRGDLNAPRLGLSETRAKEIFDETDTVIHNGADVSFLKTYKTLSKTNVGSTRELVKLCLPSRIPIHFISSASVAHLSGRASFGEESVSEYEPPQDGSDGYTATKWASERFLELVSEKFSIPVWIHRPSSITGAEAPALDLMTNLLQFSKTMSKVPYSPTWSGTLDFVSVESVAHDIVEEVKNDSAHSSGMVRFMYESGDLEIAVQDMQGSLAKQTGEEFDKVDVETWTREAVSEGLDELVAAYLSTAANLPIMFPRLIRDNKRRRIEQKVQEQPSRGSSLREVVGRWLWSRQ.

The region spanning Asn10–Ala411 is the Ketosynthase family 3 (KS3) domain. Residues Val519–Asp837 are acyl transferase. The tract at residues His909–Pro1042 is N-terminal hotdog fold. Residues His909–Thr1208 form a dehydratase (DH) domain region. The PKS/mFAS DH domain occupies His909 to Glu1210. His941 serves as the catalytic Proton acceptor; for dehydratase activity. The segment at Met1057 to Glu1210 is C-terminal hotdog fold. The active-site Proton donor; for dehydratase activity is the Asp1117. The tract at residues Asp1349–Asn1572 is methyltransferase (MT) domain. The segment at Thr2073–Ile2246 is ketoreductase (KR)domain. The Carrier 1 domain occupies Ala2351 to Leu2433. O-(pantetheine 4'-phosphoryl)serine is present on Ser2393. 2 disordered regions span residues Lys2460–Ala2504 and Ala2535–Asp2554. Acidic residues predominate over residues Glu2479–Ala2490. The segment covering Asn2495–Ala2504 has biased composition (polar residues). The span at Thr2536–Ser2549 shows a compositional bias: low complexity. The interval Arg2584 to Gln3019 is condensation. Positions Glu3047–Arg3443 are adenylation. In terms of domain architecture, Carrier 2 spans Lys3562–Ser3642. Ser3602 is subject to O-(pantetheine 4'-phosphoryl)serine. Residues Ile3703–His3924 form a reductase-like region.

It belongs to the NRP synthetase family.

It functions in the pathway mycotoxin biosynthesis. In terms of biological role, hybrid PKS-NRPS synthetase; part of the gene cluster that mediates the biosynthesis of the mycotoxins phomacins, leucine-derived cytochalasans with potent actin polymerization-inhibitory activities and monocot-specific antigerminative activities. The first step in the pathway is catalyzed by the hybrid PKS-NRPS phmA, assisted by the enoyl reductase phmE, that are responsible for fusion of the leucine precursor and the polyketide backbone to produce a 2-pyrrolidone intermediate. The polyketide synthase module (PKS) of phmA is responsible for the synthesis of the polyketide backbone and the downstream nonribosomal peptide synthetase (NRPS) amidates the carboxyl end of the polyketide with the leucine precursor. Because phmA lacks a designated enoylreductase (ER) domain, the required activity is provided the enoyl reductase phmE. Reduction by the hydrolyase phmG, followed by dehydration and intra-molecular Diels-Alder cyclization by the Diels-Alderase phmD then yield the required isoindolone-fused macrocycle. A number of oxidative steps catalyzed by the tailoring cytochrome P450 monooxygenase phmB, the FAD-linked oxidoreductase phmC and the short-chain dehydrogenase/reductase phmF, are further required to afford the final products, phomacin D and phomacin E. The polypeptide is Polyketide synthase-nonribosomal peptide synthetase phmA (Phaeosphaeria nodorum (strain SN15 / ATCC MYA-4574 / FGSC 10173) (Glume blotch fungus)).